Consider the following 3473-residue polypeptide: Genome polyprotein (3473 aa).

The stretch at 514–604 forms a coiled coil; sequence EVQDALEKSM…RNDIEALKKK (91 aa). Disordered stretches follow at residues 602–644 and 1278–1306; these read KKKP…SEAQ and YLAD…EGEI. Polar residues-rich tracts occupy residues 607 to 622 and 1278 to 1295; these read QSVT…SGTA and YLAD…SIVN. Helical transmembrane passes span 1496–1516 and 1595–1615; these read DKWI…LHYY and MSSL…GKIP. An SF3 helicase domain is found at 1751–1917; that stretch reads LELMNESYTY…PDVPKNEANP (167 aa). 1777–1784 is a binding site for ATP; it reads GAPGVGKS. The helical transmembrane segment at 2363-2383 threads the bilayer; the sequence is ILLAIGASVAVAGVAVGAVIL. Over residues 2394 to 2404 the composition is skewed to acidic residues; that stretch reads EDEEIEGEEGE. 2 disordered regions span residues 2394 to 2415 and 2438 to 2465; these read EDEE…ESDG and VAEA…LGLS. Residues 2438–2451 are compositionally biased toward basic and acidic residues; sequence VAEAHEEKDAEKPR. The Peptidase C3 domain maps to 2632-2850; the sequence is GVDRDLSMTN…YAETLTQEHL (219 aa). Catalysis depends on for picornain 3C-like protease activity residues His-2680, Glu-2717, and Cys-2811. Residues 3155-3286 enclose the RdRp catalytic domain; sequence TKGFAGDYSK…SVHEEFLDVY (132 aa).

In terms of processing, specific enzymatic cleavages by picornain 3C-like protease in vivo yield mature proteins. Picornain 3C-like protease is autocatalytically processed.

It localises to the virion. The protein localises to the host membrane. It carries out the reaction RNA(n) + a ribonucleoside 5'-triphosphate = RNA(n+1) + diphosphate. In terms of biological role, picornain 3C-like protease is a thiol protease that probably cleaves the polyprotein. In Oryza sativa (Rice), this protein is Genome polyprotein.